The primary structure comprises 528 residues: MIYSIIICAGALLGLWILEKLLAPKDTRPPLPPGPWRKPIIGNLTDFPPKGTPEWLFWAKHQERYGPMSSLEVMGQTIIMINDAQLGIEIMHKKSALSQMIPDAPFAHMAGWGMSLATERNRQAWKTIRANMKQEIGTRRAISTFHPKMEIGIRRFLLRTLDNPDDLRFHIRKEANAFMMDVAYGYTIAPHGKDELYDLTQQSVRQFSHIFSPGEWSVNFFPILRYVPSWFPGASFQIKAAEYKRTIERMTMVPYLWIKDQVARGCSRPSILLRLLQKGHYESGSHQEQVLVWTNAEFVMGGSDTTVSAVSSFFVAMALYPEVQRKAREELDRVVGPTTLATFEHRSQLPFIDALVKEVFRWHPASPLGAPHITQEDQIWDGYLLPKGALLLPNIWTFTHDPSVYHDPMVFKPERFLEGKDSPPETDPMKFVFGFGRRICPGRFVTDEKLFLIACHAVSCFFISPKDPGAPEPDWLPGVISQPGAFDLNVVPRSPAHEELIRSIETDHPWKNADATDISRFMARNQMI.

Cysteine 440 lines the heme pocket.

The protein belongs to the cytochrome P450 family. Heme is required as a cofactor.

It catalyses the reaction 8-O-methylsterigmatocystin + 2 reduced [NADPH--hemoprotein reductase] + 2 O2 = aflatoxin B1 + methanol + 2 oxidized [NADPH--hemoprotein reductase] + CO2 + H2O + 2 H(+). The catalysed reaction is 8-O-methyldihydrosterigmatocystin + 2 reduced [NADPH--hemoprotein reductase] + 2 O2 = aflatoxin B2 + methanol + 2 oxidized [NADPH--hemoprotein reductase] + CO2 + H2O + 2 H(+). It participates in mycotoxin biosynthesis; aflatoxin biosynthesis. Its function is as follows. Converts O-methylsterigmatocystin (OMST) to aflatoxin B1 and converts dihydro-O-methylsterigmatocystin (DHOMST) to aflatoxin B2 in the aflatoxin biosynthesis pathway. The sequence is that of O-methylsterigmatocystin oxidoreductase (ordA) from Aspergillus flavus.